The chain runs to 410 residues: Zinc finger protein 322 (410 aa).

8 C2H2-type zinc fingers span residues 81-103 (YRCD…QRIH), 109-131 (YKCS…QRTH), 137-159 (YTCD…QRSH), 165-187 (YLCN…RRTH), 193-215 (FKCL…QRTH), 221-243 (YKCN…KRVH), 249-271 (YKCG…QRVH), and 277-299 (YKCL…QATH). The C2H2-type 9; degenerate zinc-finger motif lies at 303–325 (FKCLEYEKSFNCSSDFIVHQRIH). The C2H2-type 10; degenerate zinc finger occupies 361–383 (YKYSVCDKTFHHSSALLQHQTVH). S400 is subject to Phosphoserine.

Belongs to the krueppel C2H2-type zinc-finger protein family. In terms of assembly, interacts with POU5F1.

It localises to the nucleus. The protein resides in the cytoplasm. Functionally, transcriptional activator. Important for maintenance of pluripotency in embryonic stem cells. Binds directly to the POU5F1 distal enhancer and the NANOG proximal promoter, and enhances expression of both genes. Can also bind to numerous other gene promoters and regulates expression of many other pluripotency factors, either directly or indirectly. Promotes inhibition of MAPK signaling during embryonic stem cell differentiation. This chain is Zinc finger protein 322 (Znf322), found in Mus musculus (Mouse).